Reading from the N-terminus, the 66-residue chain is Delta-buthitoxin-Hj1a (66 aa).

Residues 4 to 66 (RDAYIAQPHN…EPIKVPGKCH (63 aa)) form the LCN-type CS-alpha/beta domain. 4 disulfide bridges follow: cysteine 14–cysteine 65, cysteine 18–cysteine 38, cysteine 24–cysteine 48, and cysteine 28–cysteine 50.

It belongs to the long (4 C-C) scorpion toxin superfamily. Sodium channel inhibitor family. Alpha subfamily. In terms of tissue distribution, expressed by the venom gland.

Its subcellular location is the secreted. In terms of biological role, this recombinant toxin slows fast inactivation on Nav1.1/SCN1A (EC(50)=17 nM), Nav1.4/SN4A (EC(50)=7.5 nM), Nav1.5/SCN5A (EC(50)=9.2 nM) and Nav1.6/SCN8A (EC(50)=37.3 nM) voltage-gated sodium channels. On Nav1.1/SCN1A channel, it acts as an agonist by inducing a shift in both the voltage dependence of channel inactivation (alpha-toxin activity) and activation (beta-toxin activity). In vivo, shows moderate insecticidal activities. It induces irreversible paralysis in blowflies and lethal effects in D.melanogaster. This is Delta-buthitoxin-Hj1a from Hottentotta judaicus (Black scorpion).